Here is a 231-residue protein sequence, read N- to C-terminus: MDIILASGSPRRRELLSRAQLEFTIISVDIDETPYQDELPKDYIVRMVAAKAEAAATQLNIQLKNNEAHSSKSLLSQPIILLTSDTIGVLPDGKTVLIKPSNREDAYHMWQQMSDSTHEVWTAVQATQLSLHSKHTDEFDTEPVWQIINQKQIIERTEVTFIALTPEMMSDYWDGGEPADKAGGYGIQGLGAAWVSRINGSYTNVVGLPLAQTLALIKEMTNTAMLENFDA.

Residue Asp-85 is the Proton acceptor of the active site.

It belongs to the Maf family. YhdE subfamily. The cofactor is a divalent metal cation.

The protein resides in the cytoplasm. It carries out the reaction dTTP + H2O = dTMP + diphosphate + H(+). The catalysed reaction is UTP + H2O = UMP + diphosphate + H(+). Functionally, nucleoside triphosphate pyrophosphatase that hydrolyzes dTTP and UTP. May have a dual role in cell division arrest and in preventing the incorporation of modified nucleotides into cellular nucleic acids. The chain is dTTP/UTP pyrophosphatase from Psychrobacter arcticus (strain DSM 17307 / VKM B-2377 / 273-4).